We begin with the raw amino-acid sequence, 176 residues long: Oleosin Ara h 14.0101 (176 aa).

Position 2 is an N-acetylalanine; alternate (A2). A run of 2 helical transmembrane segments spans residues 50–80 (IIAV…GLAI) and 95–117 (AVVT…LTGL). Residues 157-176 (TKDAGQQIQTKAQDVKRSSS) form a disordered region.

Belongs to the oleosin family. Homodimer. Forms oligomers. In terms of tissue distribution, expressed in seeds (at protein level). Not expressed in leaves.

The protein localises to the lipid droplet. It localises to the membrane. Its function is as follows. May have a structural role to stabilize the lipid body during desiccation of the seed by preventing coalescence of the oil. Probably interacts with both lipid and phospholipid moieties of lipid bodies. May also provide recognition signals for specific lipase anchorage in lipolysis during seedling growth. The chain is Oleosin Ara h 14.0101 from Arachis hypogaea (Peanut).